The primary structure comprises 89 residues: Acylphosphatase (89 aa).

An Acylphosphatase-like domain is found at 3–88 (TLHLQIEGRV…GEYSGFEKRS (86 aa)). Residues R18 and N36 contribute to the active site.

It belongs to the acylphosphatase family.

The enzyme catalyses an acyl phosphate + H2O = a carboxylate + phosphate + H(+). The protein is Acylphosphatase (acyP) of Thiobacillus denitrificans (strain ATCC 25259 / T1).